Reading from the N-terminus, the 380-residue chain is Flap endonuclease 1 (380 aa).

Residues Met-1 to Arg-104 are N-domain. Arg-19 carries the post-translational modification Symmetric dimethylarginine; by PRMT5. Position 34 (Asp-34) interacts with Mg(2+). 2 residues coordinate DNA: Arg-47 and Arg-70. The residue at position 80 (Lys-80) is an N6-acetyllysine. Asp-86 contributes to the Mg(2+) binding site. Residues Arg-100 and Arg-104 each carry the symmetric dimethylarginine; by PRMT5 modification. The I-domain stretch occupies residues Glu-122–His-253. Glu-158, Glu-160, Asp-179, and Asp-181 together coordinate Mg(2+). Glu-158 is a DNA binding site. Ser-187 carries the post-translational modification Phosphoserine; by CDK2. A Symmetric dimethylarginine; by PRMT5 modification is found at Arg-192. Ser-197 is modified (phosphoserine). DNA contacts are provided by Gly-231 and Asp-233. Asp-233 serves as a coordination point for Mg(2+). Residues Ser-255, Ser-293, and Ser-335 each carry the phosphoserine modification. Thr-336 bears the Phosphothreonine mark. The tract at residues Thr-336–Phe-344 is interaction with PCNA. The disordered stretch occupies residues Ser-349–Lys-380. 4 positions are modified to N6-acetyllysine: Lys-354, Lys-375, Lys-377, and Lys-380. Basic residues predominate over residues Ala-363–Lys-380.

This sequence belongs to the XPG/RAD2 endonuclease family. FEN1 subfamily. In terms of assembly, interacts with PCNA. Three molecules of FEN1 bind to one PCNA trimer with each molecule binding to one PCNA monomer. PCNA stimulates the nuclease activity without altering cleavage specificity. The C-terminal domain binds EP300; can bind simultaneously to both PCNA and EP300. Interacts with DDX11; this interaction is direct and increases flap endonuclease activity of FEN1. Interacts with WDR4; regulating its endonuclease activity. Interacts with POLB. Mg(2+) is required as a cofactor. In terms of processing, acetylated by EP300. Acetylation inhibits both endonuclease and exonuclease activity. Acetylation also reduces DNA-binding activity but does not affect interaction with PCNA or EP300. Post-translationally, phosphorylation upon DNA damage induces relocalization to the nuclear plasma. Phosphorylation at Ser-187 by CDK2 occurs during late S-phase and results in dissociation from PCNA. Methylation at Arg-192 by PRMT5 impedes Ser-187 phosphorylation and increases interaction with PCNA.

The protein resides in the nucleus. Its subcellular location is the nucleolus. It is found in the nucleoplasm. The protein localises to the mitochondrion. Functionally, structure-specific nuclease with 5'-flap endonuclease and 5'-3' exonuclease activities involved in DNA replication and repair. During DNA replication, cleaves the 5'-overhanging flap structure that is generated by displacement synthesis when DNA polymerase encounters the 5'-end of a downstream Okazaki fragment. It enters the flap from the 5'-end and then tracks to cleave the flap base, leaving a nick for ligation. Also involved in the long patch base excision repair (LP-BER) pathway, by cleaving within the apurinic/apyrimidinic (AP) site-terminated flap. Acts as a genome stabilization factor that prevents flaps from equilibrating into structures that lead to duplications and deletions. Also possesses 5'-3' exonuclease activity on nicked or gapped double-stranded DNA, and exhibits RNase H activity. Also involved in replication and repair of rDNA and in repairing mitochondrial DNA. The chain is Flap endonuclease 1 from Ovis aries (Sheep).